The following is a 654-amino-acid chain: DNA ligase (654 aa).

Residues Asp-32–Asp-36 and Ser-81–Leu-82 each bind NAD(+). The active-site N6-AMP-lysine intermediate is the Lys-112. Residues Arg-133, Glu-167, and Lys-306 each coordinate NAD(+). Cys-400, Cys-403, Cys-416, and Cys-421 together coordinate Zn(2+). The 78-residue stretch at Glu-577–Glu-654 folds into the BRCT domain.

Belongs to the NAD-dependent DNA ligase family. LigA subfamily. Mg(2+) serves as cofactor. Mn(2+) is required as a cofactor.

It carries out the reaction NAD(+) + (deoxyribonucleotide)n-3'-hydroxyl + 5'-phospho-(deoxyribonucleotide)m = (deoxyribonucleotide)n+m + AMP + beta-nicotinamide D-nucleotide.. DNA ligase that catalyzes the formation of phosphodiester linkages between 5'-phosphoryl and 3'-hydroxyl groups in double-stranded DNA using NAD as a coenzyme and as the energy source for the reaction. It is essential for DNA replication and repair of damaged DNA. The chain is DNA ligase from Helicobacter acinonychis (strain Sheeba).